Consider the following 430-residue polypeptide: Tyrosine--tRNA ligase (430 aa).

Tyr-32 contributes to the L-tyrosine binding site. Positions 37–46 (PTADSLHIGH) match the 'HIGH' region motif. Positions 172 and 176 each coordinate L-tyrosine. The 'KMSKS' region motif lies at 232 to 236 (KFGKT). An ATP-binding site is contributed by Lys-235. Residues 362-430 (ISLVDLLADA…KKSYYLIIVE (69 aa)) enclose the S4 RNA-binding domain.

It belongs to the class-I aminoacyl-tRNA synthetase family. TyrS type 1 subfamily. Homodimer.

Its subcellular location is the cytoplasm. The catalysed reaction is tRNA(Tyr) + L-tyrosine + ATP = L-tyrosyl-tRNA(Tyr) + AMP + diphosphate + H(+). Functionally, catalyzes the attachment of tyrosine to tRNA(Tyr) in a two-step reaction: tyrosine is first activated by ATP to form Tyr-AMP and then transferred to the acceptor end of tRNA(Tyr). The chain is Tyrosine--tRNA ligase from Porphyromonas gingivalis (strain ATCC 33277 / DSM 20709 / CIP 103683 / JCM 12257 / NCTC 11834 / 2561).